Here is a 433-residue protein sequence, read N- to C-terminus: tRNA-2-methylthio-N(6)-dimethylallyladenosine synthase (433 aa).

Residues 4–119 (KKLFIQTLGC…ITQAIKTPKF (116 aa)) form the MTTase N-terminal domain. Positions 13, 50, 82, 151, 155, and 158 each coordinate [4Fe-4S] cluster. A Radical SAM core domain is found at 137–370 (RNSIYKSYIN…QNRHSEILDE (234 aa)). The TRAM domain occupies 373 to 433 (KKQENKTFKV…KRMVLYGEIV (61 aa)).

Belongs to the methylthiotransferase family. MiaB subfamily. In terms of assembly, monomer. [4Fe-4S] cluster serves as cofactor.

Its subcellular location is the cytoplasm. It carries out the reaction N(6)-dimethylallyladenosine(37) in tRNA + (sulfur carrier)-SH + AH2 + 2 S-adenosyl-L-methionine = 2-methylsulfanyl-N(6)-dimethylallyladenosine(37) in tRNA + (sulfur carrier)-H + 5'-deoxyadenosine + L-methionine + A + S-adenosyl-L-homocysteine + 2 H(+). Functionally, catalyzes the methylthiolation of N6-(dimethylallyl)adenosine (i(6)A), leading to the formation of 2-methylthio-N6-(dimethylallyl)adenosine (ms(2)i(6)A) at position 37 in tRNAs that read codons beginning with uridine. The chain is tRNA-2-methylthio-N(6)-dimethylallyladenosine synthase from Campylobacter jejuni (strain RM1221).